The primary structure comprises 289 residues: uncharacterized protein (289 aa).

Residues 1-58 (MDEKDWILLKILHEEQSVTKTAERLFTSQPSITYRLKKIEEIFGIELFTKRHKGITFT) form the HTH lysR-type domain. A DNA-binding region (H-T-H motif) is located at residues 18-37 (VTKTAERLFTSQPSITYRLK).

Belongs to the LysR transcriptional regulatory family.

This is an uncharacterized protein from Bacillus subtilis (strain 168).